The chain runs to 237 residues: Class B acid phosphatase (237 aa).

The N-terminal stretch at 1-25 (MRKLTLAFAAASLLFTLNSAVVARA) is a signal peptide. The active-site Nucleophile is D69. Residues D69 and D71 each contribute to the Mg(2+) site. The Proton donor role is filled by D71. Substrate contacts are provided by residues 137-138 (TG) and K177. D192 contributes to the Mg(2+) binding site.

Belongs to the class B bacterial acid phosphatase family. In terms of assembly, homotetramer. Mg(2+) serves as cofactor.

It is found in the periplasm. The catalysed reaction is a phosphate monoester + H2O = an alcohol + phosphate. Functionally, dephosphorylates several organic phosphate monoesters. Also has a phosphotransferase activity catalyzing the transfer of low-energy phosphate groups from organic phosphate monoesters to free hydroxyl groups of various organic compounds. This chain is Class B acid phosphatase, found in Klebsiella pneumoniae (strain 342).